Here is a 389-residue protein sequence, read N- to C-terminus: Indole-3-acetate monooxygenase (389 aa).

Belongs to the HpaH/HsaA monooxygenase family.

The enzyme catalyses (indol-3-yl)acetate + NADH + O2 + H(+) = 2-hydroxy-(1H-indol-3-yl)acetate + NAD(+) + H2O. The catalysed reaction is indole + NADH + O2 + H(+) = indoxyl + NAD(+) + H2O. Its function is as follows. Involved in the degradation of the plant hormone indole-3-acetic acid (IAA). Catalyzes the first step of the pathway, the conversion of IAA to 2-hydroxy-IAA (2-OH-IAA). Can also convert indole to indoxyl, which spontaneously dimerizes in the presence of oxygen to form the blue pigment indigo. The polypeptide is Indole-3-acetate monooxygenase (Pseudomonas putida (Arthrobacter siderocapsulatus)).